Reading from the N-terminus, the 519-residue chain is T-complex protein 11-like protein 2 (519 aa).

Residues 1-57 (MPFNGEKQCVSEDQPSDSDSSRFSESMASLSDYECSRQSFTSDSSSKSSSPASTSPP) form a disordered region. Phosphoserine is present on S16. Low complexity-rich tracts occupy residues 17-29 (DSDSSRFSESMAS) and 36-55 (SRQSFTSDSSSKSSSPASTS).

The protein belongs to the TCP11 family. In terms of assembly, interacts with FMNL2; this interaction promotes muscle-derived satellite cell (MDSC) migration and differentiation.

The protein resides in the cytoplasm. It is found in the cytoskeleton. Functionally, promotes the migration of muscle-derived satellite cells (MDSCs) during differentiation throught interaction with FMNL2 and therefore may participate in microfilament assembly. This Bos taurus (Bovine) protein is T-complex protein 11-like protein 2.